We begin with the raw amino-acid sequence, 715 residues long: Polyribonucleotide nucleotidyltransferase (715 aa).

Positions 485 and 491 each coordinate Mg(2+). Positions 552-611 constitute a KH domain; that stretch reads PRIHTMKIDPKKIKDVIGKGGAVIRALTEETGTSIDIDDDGTVKIAATDNNAAKAVMARI. The 69-residue stretch at 621-689 folds into the S1 motif domain; sequence NAIYKGKVTR…RQNRIRLTMK (69 aa). The segment at 695-715 is disordered; the sequence is TPVAENVTEEAEVSSEQQAEI.

It belongs to the polyribonucleotide nucleotidyltransferase family. As to quaternary structure, component of the RNA degradosome, which is a multiprotein complex involved in RNA processing and mRNA degradation. Mg(2+) is required as a cofactor.

It is found in the cytoplasm. It carries out the reaction RNA(n+1) + phosphate = RNA(n) + a ribonucleoside 5'-diphosphate. Its function is as follows. Involved in mRNA degradation. Catalyzes the phosphorolysis of single-stranded polyribonucleotides processively in the 3'- to 5'-direction. The protein is Polyribonucleotide nucleotidyltransferase of Actinobacillus pleuropneumoniae serotype 3 (strain JL03).